Here is a 1083-residue protein sequence, read N- to C-terminus: DNA primase (1083 aa).

A CHC2-type zinc finger spans residues 1022–1061 (CLRYPHRGGRTAPRTFVSLRVDHHNRLCISLAQQCFATKC).

It belongs to the herpesviridae DNA primase family. Associates with the helicase and the primase-associated factor to form the helicase-primase factor.

The protein localises to the host nucleus. Functionally, essential component of the helicase/primase complex. Unwinds the DNA at the replication forks and generates single-stranded DNA for both leading and lagging strand synthesis. The primase initiates primer synthesis and thereby produces large amount of short RNA primers on the lagging strand that the polymerase elongates using dNTPs. This chain is DNA primase, found in Varicella-zoster virus (strain Oka vaccine) (HHV-3).